The primary structure comprises 88 residues: Protein K3 (88 aa).

The S1 motif domain occupies 8 to 82 (LPNAGDVIKG…TKGYIDVNYK (75 aa)). Binding to host EIF2AK2/PKR regions lie at residues 43–53 (SVKMHMDRYVE) and 74–79 (KGYIDV).

Belongs to the poxviridae K3 protein family. Interacts with host EIF2AK2/PKR kinase.

Its function is as follows. Viral mimic of EIF2S1/eIF-2alpha that acts as a pseudosubstrate for EIF2AK2/PKR kinase. Inhibits therefore EIF2S1/eIF-2alpha phosphorylation by host EIF2AK2/PKR kinase and prevents protein synthesis shutoff. Determinant of host species specificity. This chain is Protein K3, found in Vaccinia virus (strain Western Reserve) (VACV).